The sequence spans 292 residues: Ribosomal RNA small subunit methyltransferase I (292 aa).

This sequence belongs to the methyltransferase superfamily. RsmI family.

It localises to the cytoplasm. The catalysed reaction is cytidine(1402) in 16S rRNA + S-adenosyl-L-methionine = 2'-O-methylcytidine(1402) in 16S rRNA + S-adenosyl-L-homocysteine + H(+). Functionally, catalyzes the 2'-O-methylation of the ribose of cytidine 1402 (C1402) in 16S rRNA. In Buchnera aphidicola subsp. Baizongia pistaciae (strain Bp), this protein is Ribosomal RNA small subunit methyltransferase I.